Consider the following 348-residue polypeptide: Ion-translocating oxidoreductase complex subunit D (348 aa).

5 consecutive transmembrane segments (helical) span residues 15 to 35 (LTAK…GMQA), 36 to 56 (YFFG…AVAI), 67 to 87 (PTAF…LAIS), 88 to 108 (IPPY…LLLA), and 125 to 145 (VAYA…LVPI). T186 is modified (FMN phosphoryl threonine). 5 helical membrane-spanning segments follow: residues 212-232 (LFAN…LLLI), 241-261 (IPAA…LLLP), 265-285 (LNVV…FIAT), 298-318 (LIFG…GNYP), and 320-340 (AVAF…HYTQ).

The protein belongs to the NqrB/RnfD family. The complex is composed of six subunits: RnfA, RnfB, RnfC, RnfD, RnfE and RnfG. It depends on FMN as a cofactor.

The protein resides in the cell inner membrane. Its function is as follows. Part of a membrane-bound complex that couples electron transfer with translocation of ions across the membrane. The polypeptide is Ion-translocating oxidoreductase complex subunit D (Actinobacillus pleuropneumoniae serotype 5b (strain L20)).